The following is a 401-amino-acid chain: Argininosuccinate synthase (401 aa).

8–16 (AYSGGLDTS) provides a ligand contact to ATP. Y85 contributes to the L-citrulline binding site. ATP is bound at residue G115. The L-aspartate site is built by T117, N121, and D122. N121 is a binding site for L-citrulline. The L-citrulline site is built by R125, S173, E258, and Y270.

The protein belongs to the argininosuccinate synthase family. Type 1 subfamily. Homotetramer.

The protein resides in the cytoplasm. It catalyses the reaction L-citrulline + L-aspartate + ATP = 2-(N(omega)-L-arginino)succinate + AMP + diphosphate + H(+). Its pathway is amino-acid biosynthesis; L-arginine biosynthesis; L-arginine from L-ornithine and carbamoyl phosphate: step 2/3. In Staphylococcus aureus (strain MSSA476), this protein is Argininosuccinate synthase.